We begin with the raw amino-acid sequence, 345 residues long: N-acetyl-gamma-glutamyl-phosphate reductase (345 aa).

The active site involves Cys151.

The protein belongs to the NAGSA dehydrogenase family. Type 1 subfamily.

It localises to the cytoplasm. The catalysed reaction is N-acetyl-L-glutamate 5-semialdehyde + phosphate + NADP(+) = N-acetyl-L-glutamyl 5-phosphate + NADPH + H(+). The protein operates within amino-acid biosynthesis; L-arginine biosynthesis; N(2)-acetyl-L-ornithine from L-glutamate: step 3/4. Its function is as follows. Catalyzes the NADPH-dependent reduction of N-acetyl-5-glutamyl phosphate to yield N-acetyl-L-glutamate 5-semialdehyde. The polypeptide is N-acetyl-gamma-glutamyl-phosphate reductase (Clostridium novyi (strain NT)).